Reading from the N-terminus, the 690-residue chain is DNA ligase (690 aa).

Residues 49–53 (DAEYD), 98–99 (SL), and Glu-129 contribute to the NAD(+) site. Lys-131 acts as the N6-AMP-lysine intermediate in catalysis. Residues Arg-152, Glu-191, Lys-308, and Lys-332 each contribute to the NAD(+) site. Zn(2+) contacts are provided by Cys-426, Cys-429, Cys-444, and Cys-450. The BRCT domain occupies 607–690 (EDAARLEGLT…ALLREQGIDA (84 aa)).

This sequence belongs to the NAD-dependent DNA ligase family. LigA subfamily. The cofactor is Mg(2+). Mn(2+) is required as a cofactor.

The enzyme catalyses NAD(+) + (deoxyribonucleotide)n-3'-hydroxyl + 5'-phospho-(deoxyribonucleotide)m = (deoxyribonucleotide)n+m + AMP + beta-nicotinamide D-nucleotide.. DNA ligase that catalyzes the formation of phosphodiester linkages between 5'-phosphoryl and 3'-hydroxyl groups in double-stranded DNA using NAD as a coenzyme and as the energy source for the reaction. It is essential for DNA replication and repair of damaged DNA. The sequence is that of DNA ligase from Salinibacter ruber (strain DSM 13855 / M31).